The chain runs to 123 residues: Small ribosomal subunit protein uS12 (123 aa).

At D89 the chain carries 3-methylthioaspartic acid.

It belongs to the universal ribosomal protein uS12 family. In terms of assembly, part of the 30S ribosomal subunit. Contacts proteins S8 and S17. May interact with IF1 in the 30S initiation complex.

With S4 and S5 plays an important role in translational accuracy. Its function is as follows. Interacts with and stabilizes bases of the 16S rRNA that are involved in tRNA selection in the A site and with the mRNA backbone. Located at the interface of the 30S and 50S subunits, it traverses the body of the 30S subunit contacting proteins on the other side and probably holding the rRNA structure together. The combined cluster of proteins S8, S12 and S17 appears to hold together the shoulder and platform of the 30S subunit. The sequence is that of Small ribosomal subunit protein uS12 from Granulibacter bethesdensis (strain ATCC BAA-1260 / CGDNIH1).